Consider the following 302-residue polypeptide: MSAKLIKGTDIREEILEEVTKEVAELKEKTGKVPGLVTILVGENPASVSYVTLKIKTAHRVGFTEIQDNQSPDISEEDLLALIDKYNNDDSINGILVQLPLPKHIDDKKILNAIDPDKDVDGFHPVNVGRLMIGGDEVKFAPCTPAGIQEMIVRAGVETSGAEVVVVGRSNIVGKPIANMMVQKGPGANSTVTIVHTRTKDLAAHCQRADILIVAAGVPGLVKPEWIKKGACVIDVGVNRVGTKISEKTGKEIAVLRGDVDFDAAKEIAGSITPVPGGVGPMTITMLMVNTLKSFKFANGLM.

NADP(+)-binding positions include 168 to 170, Thr197, and Val238; that span reads GRS.

It belongs to the tetrahydrofolate dehydrogenase/cyclohydrolase family. As to quaternary structure, homodimer.

It catalyses the reaction (6R)-5,10-methylene-5,6,7,8-tetrahydrofolate + NADP(+) = (6R)-5,10-methenyltetrahydrofolate + NADPH. The enzyme catalyses (6R)-5,10-methenyltetrahydrofolate + H2O = (6R)-10-formyltetrahydrofolate + H(+). The protein operates within one-carbon metabolism; tetrahydrofolate interconversion. In terms of biological role, catalyzes the oxidation of 5,10-methylenetetrahydrofolate to 5,10-methenyltetrahydrofolate and then the hydrolysis of 5,10-methenyltetrahydrofolate to 10-formyltetrahydrofolate. The protein is Bifunctional protein FolD of Desulfatibacillum aliphaticivorans.